A 147-amino-acid polypeptide reads, in one-letter code: Interleukin-4 (147 aa).

The signal sequence occupies residues 1 to 19 (MGLRPQLAAILLCLLACTG). 4 N-linked (GlcNAc...) asparagine glycosylation sites follow: Asn20, Asn61, Asn90, and Asn117. 2 disulfides stabilise this stretch: Cys47/Cys87 and Cys69/Cys114.

The protein belongs to the IL-4/IL-13 family.

Its subcellular location is the secreted. Its function is as follows. Participates in at least several B-cell activation processes as well as of other cell types. It is a costimulator of DNA-synthesis. It induces the expression of class II MHC molecules on resting B-cells. It enhances both secretion and cell surface expression of IgE and IgG1. It also regulates the expression of the low affinity Fc receptor for IgE (CD23) on both lymphocytes and monocytes. Positively regulates IL31RA expression in macrophages. Stimulates autophagy in dendritic cells by interfering with mTORC1 signaling and through the induction of RUFY4. The sequence is that of Interleukin-4 (IL4) from Mesocricetus auratus (Golden hamster).